The primary structure comprises 444 residues: Gamma-glutamyl phosphate reductase (444 aa).

The protein belongs to the gamma-glutamyl phosphate reductase family.

It is found in the cytoplasm. The catalysed reaction is L-glutamate 5-semialdehyde + phosphate + NADP(+) = L-glutamyl 5-phosphate + NADPH + H(+). Its pathway is amino-acid biosynthesis; L-proline biosynthesis; L-glutamate 5-semialdehyde from L-glutamate: step 2/2. In terms of biological role, catalyzes the NADPH-dependent reduction of L-glutamate 5-phosphate into L-glutamate 5-semialdehyde and phosphate. The product spontaneously undergoes cyclization to form 1-pyrroline-5-carboxylate. In Albidiferax ferrireducens (strain ATCC BAA-621 / DSM 15236 / T118) (Rhodoferax ferrireducens), this protein is Gamma-glutamyl phosphate reductase.